Here is a 400-residue protein sequence, read N- to C-terminus: 1-deoxy-D-xylulose 5-phosphate reductoisomerase (400 aa).

T17, G18, S19, I20, and N131 together coordinate NADPH. A 1-deoxy-D-xylulose 5-phosphate-binding site is contributed by K132. E133 serves as a coordination point for NADPH. D157 is a binding site for Mn(2+). 4 residues coordinate 1-deoxy-D-xylulose 5-phosphate: S158, E159, S188, and H211. Mn(2+) is bound at residue E159. Position 217 (G217) interacts with NADPH. 1-deoxy-D-xylulose 5-phosphate-binding residues include S224, N229, K230, and E233. E233 serves as a coordination point for Mn(2+).

The protein belongs to the DXR family. Requires Mg(2+) as cofactor. It depends on Mn(2+) as a cofactor.

It carries out the reaction 2-C-methyl-D-erythritol 4-phosphate + NADP(+) = 1-deoxy-D-xylulose 5-phosphate + NADPH + H(+). It functions in the pathway isoprenoid biosynthesis; isopentenyl diphosphate biosynthesis via DXP pathway; isopentenyl diphosphate from 1-deoxy-D-xylulose 5-phosphate: step 1/6. Catalyzes the NADPH-dependent rearrangement and reduction of 1-deoxy-D-xylulose-5-phosphate (DXP) to 2-C-methyl-D-erythritol 4-phosphate (MEP). This chain is 1-deoxy-D-xylulose 5-phosphate reductoisomerase, found in Pseudomonas putida (strain ATCC 700007 / DSM 6899 / JCM 31910 / BCRC 17059 / LMG 24140 / F1).